A 730-amino-acid chain; its full sequence is Protein groucho (730 aa).

Residues 144–411 form a disordered region; it reads QVPGGPPQPM…GKPAYSFHMN (268 aa). Basic and acidic residues predominate over residues 198-233; it reads AEERLRNSVSPADREKYRTRSPLDIENDSKRRKDEK. Phosphoserine is present on residues Ser205, Ser207, and Ser218. Positions 206–267 are CCN domain; the sequence is VSPADREKYR…SPRPNGEHVS (62 aa). Positions 227-230 match the Nuclear localization signal motif; that stretch reads KRRK. Ser242 is subject to Phosphoserine; by CK2. Residues 254-283 show a composition bias toward basic and acidic residues; it reads MESHSPRPNGEHVSMEVRDRESLNGERLEK. Ser258 carries the post-translational modification Phosphoserine; by CDC2. Positions 262–425 are binding to basic helix-loop-helix domain; the sequence is NGEHVSMEVR…LQPVPFPPDA (164 aa). Ser267 carries the phosphoserine modification. Low complexity-rich tracts occupy residues 296 to 308, 322 to 345, and 353 to 362; these read SRSG…STPS, AKAR…QMMP, and YPGAPYQRPA. 2 positions are modified to phosphothreonine: Thr326 and Thr328. Residues 366 to 382 are compositionally biased toward pro residues; that stretch reads QRPPSDPAYGRPPPMPY. WD repeat units follow at residues 442 to 480, 488 to 527, 532 to 571, 574 to 613, 615 to 654, 656 to 695, and 697 to 730; these read SHGE…NKNP, QRDN…PRIK, SAAP…LVRQ, GHTD…QLQQ, DFSS…KYQL, LHES…SIFQ, and KETS…EVIY.

It belongs to the WD repeat Groucho/TLE family. In terms of assembly, forms a complex with the hairy/Enhancer of split/deadpan family of basic helix-loop-helix proteins in order to repress transcription. Its activity in regulating transcription depends on other proteins as it lacks a DNA-binding motif. Interacts with hairy/hry (via WRPW motif). Post-translationally, ubiquitinated by XIAP/BIRC4. Ubiquitinated by hyd in response to Wnt signaling, leading to degradation by the proteasome.

It localises to the nucleus. Its function is as follows. Transcriptional corepressor that regulates transcription when recruited to specific target DNA by hairy-related bHLH proteins. Maternally required for neurogenesis; in the segregation of the neuroectoderm. Directly or indirectly interacts with Notch and Delta. This Drosophila melanogaster (Fruit fly) protein is Protein groucho (gro).